A 392-amino-acid polypeptide reads, in one-letter code: Autophagy-related protein 21 (392 aa).

WD repeat units lie at residues 200-240 (VHQS…NDEP) and 250-289 (SRPS…TEAD). A L/FRRG motif motif is present at residues 246 to 250 (FRRGS).

The protein belongs to the WD repeat PROPPIN family.

It is found in the cytoplasm. It localises to the membrane. Its subcellular location is the vacuole membrane. In terms of biological role, required for cytoplasm to vacuole transport (Cvt) vesicles formation and mitophagy. Involved in binding of phosphatidylethanolamine to ATG8 and in recruitment of ATG8 and ATG5 to the pre-autophagosomal structure. Protects ATG8 from ARG4-mediated cleavage. The polypeptide is Autophagy-related protein 21 (ATG21) (Kluyveromyces lactis (strain ATCC 8585 / CBS 2359 / DSM 70799 / NBRC 1267 / NRRL Y-1140 / WM37) (Yeast)).